The chain runs to 110 residues: UPF0145 protein LMOf2365_0219 (110 aa).

The protein belongs to the UPF0145 family.

This Listeria monocytogenes serotype 4b (strain F2365) protein is UPF0145 protein LMOf2365_0219.